The following is a 150-amino-acid chain: Transcriptional repressor NrdR (150 aa).

A zinc finger spans residues 3 to 34 (CPFCGYEDTFVIDTREIEDQRVIRRRRECPNC). The ATP-cone domain occupies 49 to 139 (IMVIKKDGRR…VYQEFSSLEE (91 aa)).

The protein belongs to the NrdR family. Requires Zn(2+) as cofactor.

Negatively regulates transcription of bacterial ribonucleotide reductase nrd genes and operons by binding to NrdR-boxes. This is Transcriptional repressor NrdR from Dictyoglomus thermophilum (strain ATCC 35947 / DSM 3960 / H-6-12).